The following is a 122-amino-acid chain: Small ribosomal subunit protein uS12 (122 aa).

3-methylthioaspartic acid is present on Asp89.

This sequence belongs to the universal ribosomal protein uS12 family. In terms of assembly, part of the 30S ribosomal subunit. Contacts proteins S8 and S17. May interact with IF1 in the 30S initiation complex.

Functionally, with S4 and S5 plays an important role in translational accuracy. In terms of biological role, interacts with and stabilizes bases of the 16S rRNA that are involved in tRNA selection in the A site and with the mRNA backbone. Located at the interface of the 30S and 50S subunits, it traverses the body of the 30S subunit contacting proteins on the other side and probably holding the rRNA structure together. The combined cluster of proteins S8, S12 and S17 appears to hold together the shoulder and platform of the 30S subunit. This is Small ribosomal subunit protein uS12 from Corynebacterium glutamicum (strain R).